Reading from the N-terminus, the 351-residue chain is Dihydroorotate dehydrogenase (quinone) (351 aa).

FMN-binding positions include 61–65 (AGLDK) and Thr85. Lys65 lines the substrate pocket. 110-114 (NRMGF) provides a ligand contact to substrate. The FMN site is built by Asn139 and Asn172. Asn172 provides a ligand contact to substrate. The Nucleophile role is filled by Ser175. Residue Asn177 coordinates substrate. FMN-binding residues include Lys217 and Thr245. 246 to 247 (NT) serves as a coordination point for substrate. Residues Gly268, Gly297, and 318–319 (YS) contribute to the FMN site.

The protein belongs to the dihydroorotate dehydrogenase family. Type 2 subfamily. In terms of assembly, monomer. FMN serves as cofactor.

It is found in the cell membrane. The catalysed reaction is (S)-dihydroorotate + a quinone = orotate + a quinol. The protein operates within pyrimidine metabolism; UMP biosynthesis via de novo pathway; orotate from (S)-dihydroorotate (quinone route): step 1/1. Functionally, catalyzes the conversion of dihydroorotate to orotate with quinone as electron acceptor. This Stenotrophomonas maltophilia (strain R551-3) protein is Dihydroorotate dehydrogenase (quinone).